We begin with the raw amino-acid sequence, 86 residues long: Exodeoxyribonuclease 7 small subunit (86 aa).

It belongs to the XseB family. Heterooligomer composed of large and small subunits.

It localises to the cytoplasm. It catalyses the reaction Exonucleolytic cleavage in either 5'- to 3'- or 3'- to 5'-direction to yield nucleoside 5'-phosphates.. Functionally, bidirectionally degrades single-stranded DNA into large acid-insoluble oligonucleotides, which are then degraded further into small acid-soluble oligonucleotides. The sequence is that of Exodeoxyribonuclease 7 small subunit from Xanthomonas euvesicatoria pv. vesicatoria (strain 85-10) (Xanthomonas campestris pv. vesicatoria).